Consider the following 78-residue polypeptide: uncharacterized protein (78 aa).

This is an uncharacterized protein from Archaeoglobus fulgidus (strain ATCC 49558 / DSM 4304 / JCM 9628 / NBRC 100126 / VC-16).